The following is a 379-amino-acid chain: Homoserine O-succinyltransferase (379 aa).

Positions 51-360 (NAVLICHALS…DAPQGHDAFL (310 aa)) constitute an AB hydrolase-1 domain. Residue Ser-157 is the Nucleophile of the active site. Position 227 (Arg-227) interacts with substrate. Catalysis depends on residues Asp-323 and His-356. Residue Asp-357 coordinates substrate.

It belongs to the AB hydrolase superfamily. MetX family. In terms of assembly, homodimer.

The protein localises to the cytoplasm. The enzyme catalyses L-homoserine + succinyl-CoA = O-succinyl-L-homoserine + CoA. It functions in the pathway amino-acid biosynthesis; L-methionine biosynthesis via de novo pathway; O-succinyl-L-homoserine from L-homoserine: step 1/1. In terms of biological role, transfers a succinyl group from succinyl-CoA to L-homoserine, forming succinyl-L-homoserine. The chain is Homoserine O-succinyltransferase from Pseudomonas fluorescens (strain ATCC BAA-477 / NRRL B-23932 / Pf-5).